A 904-amino-acid polypeptide reads, in one-letter code: Thiamine diphosphate dependent-3-acetyloctanal synthase PigD (904 aa).

The segment at arginine 879 to serine 904 is disordered. A compositionally biased stretch (polar residues) spans glutamine 886–serine 904.

The protein belongs to the TPP enzyme family. Thiamine diphosphate is required as a cofactor.

The catalysed reaction is (2E)-octenal + pyruvate + H(+) = (S)-3-acetyloctanal + CO2. The protein operates within antibiotic biosynthesis; prodigiosin biosynthesis. Functionally, involved in the biosynthesis of 2-methyl-3-n-amyl-pyrrole (MAP), one of the terminal products involved in the biosynthesis of the red antibiotic prodigiosin (Pig). Catalyzes the decarboxylation of pyruvate, followed by the modification of the resulting two-carbon fragment acetaldehyde at the C3 position of the 2-octenal (1,2-addition of acetaldehyde) giving 3-acetyloctanal. In vitro, it can act on a number of alpha,beta-unsaturated carbonyl compounds, including aldehydes and ketones, and can catalyze both 1,2-addition and Stetter-type 1,4-addition depending on the substrate. The sequence is that of Thiamine diphosphate dependent-3-acetyloctanal synthase PigD from Serratia marcescens.